A 265-amino-acid chain; its full sequence is Deoxyguanosine kinase, mitochondrial (265 aa).

Residue glycine 32 to threonine 40 coordinates ATP. Substrate-binding residues include glutamate 57, tyrosine 88, glutamine 99, and arginine 106. Glutamate 129 acts as the Proton acceptor in catalysis. Positions 130 and 135 each coordinate substrate. Position 190 to 194 (arginine 190 to arginine 194) interacts with ATP. Glutamate 199 is a binding site for substrate. Glutamate 242–phenylalanine 244 serves as a coordination point for ATP.

The protein belongs to the DCK/DGK family. As to quaternary structure, homodimer.

It localises to the mitochondrion. It carries out the reaction 2'-deoxyguanosine + ATP = dGMP + ADP + H(+). Functionally, phosphorylates deoxyguanosine in the mitochondrial matrix with high efficiency but shows very low activity against other deoxynucleosides. The chain is Deoxyguanosine kinase, mitochondrial from Xenopus laevis (African clawed frog).